The following is a 573-amino-acid chain: Isocitrate dehydrogenase kinase/phosphatase (573 aa).

Residues 317-323 (APGVRGM) and K338 contribute to the ATP site. Residue D373 is part of the active site.

The protein belongs to the AceK family.

The protein resides in the cytoplasm. The catalysed reaction is L-seryl-[isocitrate dehydrogenase] + ATP = O-phospho-L-seryl-[isocitrate dehydrogenase] + ADP + H(+). Functionally, bifunctional enzyme which can phosphorylate or dephosphorylate isocitrate dehydrogenase (IDH) on a specific serine residue. This is a regulatory mechanism which enables bacteria to bypass the Krebs cycle via the glyoxylate shunt in response to the source of carbon. When bacteria are grown on glucose, IDH is fully active and unphosphorylated, but when grown on acetate or ethanol, the activity of IDH declines drastically concomitant with its phosphorylation. This is Isocitrate dehydrogenase kinase/phosphatase from Pseudomonas fluorescens (strain ATCC BAA-477 / NRRL B-23932 / Pf-5).